The chain runs to 89 residues: Small ribosomal subunit protein uS14 (89 aa).

This sequence belongs to the universal ribosomal protein uS14 family. In terms of assembly, part of the 30S ribosomal subunit. Contacts proteins S3 and S10.

Functionally, binds 16S rRNA, required for the assembly of 30S particles and may also be responsible for determining the conformation of the 16S rRNA at the A site. This is Small ribosomal subunit protein uS14 from Cytophaga hutchinsonii (strain ATCC 33406 / DSM 1761 / CIP 103989 / NBRC 15051 / NCIMB 9469 / D465).